The sequence spans 143 residues: Nucleoside diphosphate kinase (143 aa).

ATP is bound by residues lysine 11, phenylalanine 59, arginine 87, threonine 93, arginine 104, and asparagine 114. Histidine 117 acts as the Pros-phosphohistidine intermediate in catalysis.

The protein belongs to the NDK family. In terms of assembly, homotetramer. The cofactor is Mg(2+).

The protein resides in the cytoplasm. The catalysed reaction is a 2'-deoxyribonucleoside 5'-diphosphate + ATP = a 2'-deoxyribonucleoside 5'-triphosphate + ADP. The enzyme catalyses a ribonucleoside 5'-diphosphate + ATP = a ribonucleoside 5'-triphosphate + ADP. Its function is as follows. Major role in the synthesis of nucleoside triphosphates other than ATP. The ATP gamma phosphate is transferred to the NDP beta phosphate via a ping-pong mechanism, using a phosphorylated active-site intermediate. In Shewanella denitrificans (strain OS217 / ATCC BAA-1090 / DSM 15013), this protein is Nucleoside diphosphate kinase.